We begin with the raw amino-acid sequence, 312 residues long: Aldehyde reductase YPR1 (312 aa).

Residue Tyr-56 is the Proton donor of the active site. His-112 provides a ligand contact to substrate. NADP(+) is bound at residue 220–274 (SPFGSANAPLLKEQAIIDMAKKHGVEPAQLIISWSIQRGYVVLAKSVNPERIVSN).

Belongs to the aldo/keto reductase family.

The protein localises to the cytoplasm. It catalyses the reaction a primary alcohol + NADP(+) = an aldehyde + NADPH + H(+). It carries out the reaction 2-methylbutan-1-ol + NADP(+) = 2-methylbutanal + NADPH + H(+). The catalysed reaction is hexan-1-ol + NADP(+) = hexanal + NADPH + H(+). Its function is as follows. Aldehyde reductase with broad substrate specificity, catalyzing the NADPH-dependent reduction of aldehydes into the corresponding alcohols. In vitro, displays high specific activity towards 2-methylbutanal (2-methylbutyraldehyde), as well as other aldehydes such as hexanal (a toxic lipid peroxidation product and phytoalexin), but exhibits extremely low activity as a glycerol dehydrogenase. Seems to contribute to 2-methylbutanal reduction in vivo, and may therefore play a role in isoleucine catabolism and fusel alcohol formation. In Saccharomyces cerevisiae (strain ATCC 204508 / S288c) (Baker's yeast), this protein is Aldehyde reductase YPR1 (YPR1).